We begin with the raw amino-acid sequence, 876 residues long: Exosome complex component 10 homolog (876 aa).

Positions 1-22 are disordered; sequence MSGEESMPDEEQKQSEEEEEMI. The 3'-5' exonuclease domain maps to 279 to 445; that stretch reads TMIDTKEKLE…YSYDMLREQL (167 aa). Positions 303, 305, 361, and 430 each coordinate Mg(2+). Positions 489-569 constitute an HRDC domain; the sequence is NTRQDYALTH…VEARDVKLEK (81 aa). Composition is skewed to basic and acidic residues over residues 690–730, 741–752, and 834–847; these read EKQE…EFDA, VPDDPNKPKDPE, and KPVR…DPFH. A disordered region spans residues 690–876; the sequence is EKQEEEERKE…NRQGTINYKK (187 aa). The span at 848–861 shows a compositional bias: basic residues; sequence QKYRLKNKTKKNMA.

The protein belongs to the exosome component 10/RRP6 family. In terms of assembly, component of the RNA exosome complex. Interacts with crn-5. Mg(2+) serves as cofactor. In terms of tissue distribution, ubiquitously expressed.

The protein localises to the nucleus. It is found in the nucleolus. The protein resides in the nucleoplasm. Its function is as follows. Catalytic component of the RNA exosome complex which has 3'-&gt;5' exoribonuclease activity and participates in a multitude of cellular RNA processing and degradation events. Involved in apoptotic DNA degradation. Involved in regulation of antisense ribosomal siRNA production. Involved in response to cold-warm shock. This is Exosome complex component 10 homolog from Caenorhabditis elegans.